Reading from the N-terminus, the 873-residue chain is Actin-related protein 8 (873 aa).

The tract at residues 108–129 (DEQVKPTSSTSSTSTTEEVEIK) is disordered. Over residues 114–123 (TSSTSSTSTT) the composition is skewed to low complexity. 368–371 (DLGH) contributes to the ATP binding site. The segment covering 596–650 (NNNNNNNNSSSSSNNNNNNNNSGSNSNINSYNNNNNNNNNNNNNNNNNNNNSFNN) has biased composition (low complexity). The segment at 596-701 (NNNNNNNNSS…TSSPTKKLKI (106 aa)) is disordered. A compositionally biased stretch (polar residues) spans 651–668 (VTIVTSTLNSNSTVPSTL). The segment covering 669–696 (NSNSTVPSISNSNSTVPSTSTSTTSSPT) has biased composition (low complexity). Residues 762-804 (FKQLEQQYQAQQLQFQQQLQQQQQQQQQLQQQLQNSTNSATTT) are a coiled coil.

This sequence belongs to the actin family. ARP8 subfamily. In terms of assembly, component of the chromatin remodeling INO80 complex. Exists as monomers and dimers, but the dimer is most probably the biologically relevant form required for stable interactions with histones that exploits the twofold symmetry of the nucleosome core.

The protein resides in the nucleus. It localises to the cytoplasm. The protein localises to the cytoskeleton. In terms of biological role, plays an important role in the functional organization of mitotic chromosomes. Exhibits low basal ATPase activity, and unable to polymerize. Proposed core component of the chromatin remodeling INO80 complex which is involved in transcriptional regulation, DNA replication and probably DNA repair. Strongly prefer nucleosomes and H3-H4 tetramers over H2A-H2B dimers, suggesting it may act as a nucleosome recognition module within the complex. This is Actin-related protein 8 from Dictyostelium discoideum (Social amoeba).